Here is an 896-residue protein sequence, read N- to C-terminus: Protein translocase subunit SecA (896 aa).

Residues Q87, 105 to 109, and D512 contribute to the ATP site; that span reads GEGKT. Positions 858–886 are disordered; it reads RAGGEAEAAKPVVRDEKKVGRNDPCPCGS. Residues 869–878 show a composition bias toward basic and acidic residues; it reads VVRDEKKVGR. Residues C882, C884, C893, and C894 each coordinate Zn(2+).

Belongs to the SecA family. Monomer and homodimer. Part of the essential Sec protein translocation apparatus which comprises SecA, SecYEG and auxiliary proteins SecDF-YajC and YidC. It depends on Zn(2+) as a cofactor.

It localises to the cell inner membrane. Its subcellular location is the cytoplasm. The enzyme catalyses ATP + H2O + cellular proteinSide 1 = ADP + phosphate + cellular proteinSide 2.. Its function is as follows. Part of the Sec protein translocase complex. Interacts with the SecYEG preprotein conducting channel. Has a central role in coupling the hydrolysis of ATP to the transfer of proteins into and across the cell membrane, serving as an ATP-driven molecular motor driving the stepwise translocation of polypeptide chains across the membrane. The polypeptide is Protein translocase subunit SecA (Syntrophotalea carbinolica (strain DSM 2380 / NBRC 103641 / GraBd1) (Pelobacter carbinolicus)).